The sequence spans 364 residues: Aminomethyltransferase (364 aa).

It belongs to the GcvT family. As to quaternary structure, the glycine cleavage system is composed of four proteins: P, T, L and H.

The catalysed reaction is N(6)-[(R)-S(8)-aminomethyldihydrolipoyl]-L-lysyl-[protein] + (6S)-5,6,7,8-tetrahydrofolate = N(6)-[(R)-dihydrolipoyl]-L-lysyl-[protein] + (6R)-5,10-methylene-5,6,7,8-tetrahydrofolate + NH4(+). Functionally, the glycine cleavage system catalyzes the degradation of glycine. This is Aminomethyltransferase from Shewanella pealeana (strain ATCC 700345 / ANG-SQ1).